The sequence spans 179 residues: NADH-quinone oxidoreductase subunit I (179 aa).

2 4Fe-4S ferredoxin-type domains span residues 45–74 (RHPDTGLEKCIGCSLCAAVCPAYAIYVEAA) and 90–119 (KVYEINMLRCIFCGLCEEACPTGAVVLGNE). Cys-54, Cys-57, Cys-60, Cys-64, Cys-99, Cys-102, Cys-105, and Cys-109 together coordinate [4Fe-4S] cluster. The disordered stretch occupies residues 146–179 (PQRREAQRTGKPVRLGFKVPKGPRPELEGVEYPR). The span at 168 to 179 (PRPELEGVEYPR) shows a compositional bias: basic and acidic residues.

It belongs to the complex I 23 kDa subunit family. In terms of assembly, NDH-1 is composed of 15 different subunits. Subunits NuoA, H, J, K, L, M, N constitute the membrane sector of the complex. [4Fe-4S] cluster is required as a cofactor.

The protein localises to the cell membrane. It carries out the reaction a quinone + NADH + 5 H(+)(in) = a quinol + NAD(+) + 4 H(+)(out). Functionally, NDH-1 shuttles electrons from NADH, via FMN and iron-sulfur (Fe-S) centers, to quinones in the respiratory chain. The immediate electron acceptor for the enzyme in this species is believed to be ubiquinone. Couples the redox reaction to proton translocation (for every two electrons transferred, four hydrogen ions are translocated across the cytoplasmic membrane), and thus conserves the redox energy in a proton gradient. The chain is NADH-quinone oxidoreductase subunit I from Deinococcus geothermalis (strain DSM 11300 / CIP 105573 / AG-3a).